The primary structure comprises 384 residues: N-acetyldiaminopimelate deacetylase (384 aa).

The active site involves Asp-74. Glu-133 functions as the Proton acceptor in the catalytic mechanism.

This sequence belongs to the peptidase M20A family. N-acetyldiaminopimelate deacetylase subfamily.

It carries out the reaction N-acetyl-(2S,6S)-2,6-diaminopimelate + H2O = (2S,6S)-2,6-diaminopimelate + acetate. It participates in amino-acid biosynthesis; L-lysine biosynthesis via DAP pathway; LL-2,6-diaminopimelate from (S)-tetrahydrodipicolinate (acetylase route): step 3/3. Its function is as follows. Catalyzes the conversion of N-acetyl-diaminopimelate to diaminopimelate and acetate. The sequence is that of N-acetyldiaminopimelate deacetylase from Pediococcus pentosaceus (strain ATCC 25745 / CCUG 21536 / LMG 10740 / 183-1w).